We begin with the raw amino-acid sequence, 284 residues long: MTSSQFDCQYCTSSLIGKKYVLKDDNLYCISCYDRIFSNYCEQCKEPIESDSKDLCYKNRHWHEGCFRCNKCHHSLVEKPFVAKDDRLLCTDCYSNECSSKCFHCKRTIMPGSRKMEFKGNYWHETCFVCEHCRQPIGTKPLISKESGNYCVPCFEKEFAHYCNFCKKVITSGGITFRDQIWHKECFLCSGCRKELYEEAFMSKDDFPFCLDCYNHLYAKKCAACTKPITGLRGAKFICFQDRQWHSECFNCGKCSVSLVGEGFLTHNMEILCRKCGSGADTDA.

A C4-type zinc finger spans residues 8-32 (CQYCTSSLIGKKYVLKDDNLYCISC). LIM zinc-binding domains lie at 39–100 (NYCE…ECSS), 101–160 (KCFH…KEFA), and 161–220 (HYCN…LYAK).

As to quaternary structure, interacts with CREM (via the third LIM domain). Interacts (via second LIM domain) with SPAG8. In terms of tissue distribution, testis-specific, temporal expression is coordinated with CREM.

It is found in the nucleus. May be involved in the regulation of spermatogenesis. Stimulates CREM transcriptional activity in a phosphorylation-independent manner. The chain is Four and a half LIM domains protein 5 (Fhl5) from Mus musculus (Mouse).